The primary structure comprises 203 residues: Ribosomal RNA small subunit methyltransferase G (203 aa).

Residues Gly73, Leu78, 124 to 125, and Arg139 each bind S-adenosyl-L-methionine; that span reads VE.

It belongs to the methyltransferase superfamily. RNA methyltransferase RsmG family.

Its subcellular location is the cytoplasm. It carries out the reaction guanosine(527) in 16S rRNA + S-adenosyl-L-methionine = N(7)-methylguanosine(527) in 16S rRNA + S-adenosyl-L-homocysteine. Specifically methylates the N7 position of guanine in position 527 of 16S rRNA. In Haemophilus influenzae (strain 86-028NP), this protein is Ribosomal RNA small subunit methyltransferase G.